We begin with the raw amino-acid sequence, 135 residues long: UPF0102 protein RPC_0320 (135 aa).

Belongs to the UPF0102 family.

The chain is UPF0102 protein RPC_0320 from Rhodopseudomonas palustris (strain BisB18).